Reading from the N-terminus, the 758-residue chain is Protein hunchback (758 aa).

Disordered regions lie at residues 30–51 (EPGH…PIPS) and 172–214 (EKLQ…EDMK). Residues 39-51 (SVASSPRQSPIPS) are compositionally biased toward polar residues. At threonine 178 the chain carries Phosphothreonine. Serine 188, serine 207, serine 209, and serine 210 each carry phosphoserine. The span at 198 to 214 (EPEKEHDQMSNSSEDMK) shows a compositional bias: basic and acidic residues. 4 C2H2-type zinc fingers span residues 240–262 (YKCK…TRTH), 269–291 (LQCP…IRKH), 297–319 (FQCD…RKSH), and 325–349 (YRCA…KYGH). 2 disordered regions span residues 365 to 416 (LVID…PVAT) and 513 to 536 (QLQQ…YERK). Composition is skewed to low complexity over residues 398-415 (VAAV…QPVA) and 513-522 (QLQQQNQQQS). Acidic residues predominate over residues 523–532 (DNEEEEQDDE). Phosphoserine occurs at positions 537 and 540. The segment at 603–695 (MTSPEQLKVP…TTSAVAAPPS (93 aa)) is disordered. Over residues 652-695 (ANTSASSTASSSGNSSNASSNSNGNSSSNSSSNGTTSAVAAPPS) the composition is skewed to low complexity. 2 consecutive C2H2-type zinc fingers follow at residues 705–727 (YECK…MGYH) and 733–757 (FKCN…RNAH).

It belongs to the hunchback C2H2-type zinc-finger protein family. In embryo, expression of maternal transcript is highest in anterior region. Zygotic transcript is expressed in anterior region until the beginning of gastrulation and in posterior region until early gastrulation. After this, it is expressed in developing nervous system.

The protein resides in the nucleus. Its function is as follows. Gap class segmentation protein that controls development of head structures. This is Protein hunchback from Drosophila melanogaster (Fruit fly).